The following is a 205-amino-acid chain: Thiamine-phosphate synthase (205 aa).

4-amino-2-methyl-5-(diphosphooxymethyl)pyrimidine-binding positions include 35-39 (QYRDK) and N67. Positions 68 and 86 each coordinate Mg(2+). T105 lines the 4-amino-2-methyl-5-(diphosphooxymethyl)pyrimidine pocket. 132 to 134 (SLT) contacts 2-[(2R,5Z)-2-carboxy-4-methylthiazol-5(2H)-ylidene]ethyl phosphate. A 4-amino-2-methyl-5-(diphosphooxymethyl)pyrimidine-binding site is contributed by K135. G162 lines the 2-[(2R,5Z)-2-carboxy-4-methylthiazol-5(2H)-ylidene]ethyl phosphate pocket.

It belongs to the thiamine-phosphate synthase family. Requires Mg(2+) as cofactor.

The enzyme catalyses 2-[(2R,5Z)-2-carboxy-4-methylthiazol-5(2H)-ylidene]ethyl phosphate + 4-amino-2-methyl-5-(diphosphooxymethyl)pyrimidine + 2 H(+) = thiamine phosphate + CO2 + diphosphate. It carries out the reaction 2-(2-carboxy-4-methylthiazol-5-yl)ethyl phosphate + 4-amino-2-methyl-5-(diphosphooxymethyl)pyrimidine + 2 H(+) = thiamine phosphate + CO2 + diphosphate. It catalyses the reaction 4-methyl-5-(2-phosphooxyethyl)-thiazole + 4-amino-2-methyl-5-(diphosphooxymethyl)pyrimidine + H(+) = thiamine phosphate + diphosphate. It participates in cofactor biosynthesis; thiamine diphosphate biosynthesis; thiamine phosphate from 4-amino-2-methyl-5-diphosphomethylpyrimidine and 4-methyl-5-(2-phosphoethyl)-thiazole: step 1/1. Condenses 4-methyl-5-(beta-hydroxyethyl)thiazole monophosphate (THZ-P) and 2-methyl-4-amino-5-hydroxymethyl pyrimidine pyrophosphate (HMP-PP) to form thiamine monophosphate (TMP). The sequence is that of Thiamine-phosphate synthase from Pseudomonas syringae pv. syringae (strain B728a).